A 540-amino-acid chain; its full sequence is CTP synthase (540 aa).

The interval 1–265 (MVRFIFITGG…DNKVLKFFNL (265 aa)) is amidoligase domain. A CTP-binding site is contributed by serine 13. UTP is bound at residue serine 13. ATP-binding positions include 14–19 (SLGKGL) and aspartate 71. The Mg(2+) site is built by aspartate 71 and glutamate 139. CTP-binding positions include 146–148 (DIE), 186–191 (KTKPTQ), and lysine 222. Residues 186-191 (KTKPTQ) and lysine 222 each bind UTP. The region spanning 290-539 (RIAIIAKYHK…VEAAIKYNKN (250 aa)) is the Glutamine amidotransferase type-1 domain. Glycine 352 provides a ligand contact to L-glutamine. Cysteine 379 acts as the Nucleophile; for glutamine hydrolysis in catalysis. L-glutamine-binding positions include 380-383 (LGMQ), glutamate 403, and arginine 467. Active-site residues include histidine 512 and glutamate 514.

The protein belongs to the CTP synthase family. Homotetramer.

The enzyme catalyses UTP + L-glutamine + ATP + H2O = CTP + L-glutamate + ADP + phosphate + 2 H(+). It catalyses the reaction L-glutamine + H2O = L-glutamate + NH4(+). It carries out the reaction UTP + NH4(+) + ATP = CTP + ADP + phosphate + 2 H(+). It participates in pyrimidine metabolism; CTP biosynthesis via de novo pathway; CTP from UDP: step 2/2. Its activity is regulated as follows. Allosterically activated by GTP, when glutamine is the substrate; GTP has no effect on the reaction when ammonia is the substrate. The allosteric effector GTP functions by stabilizing the protein conformation that binds the tetrahedral intermediate(s) formed during glutamine hydrolysis. Inhibited by the product CTP, via allosteric rather than competitive inhibition. Its function is as follows. Catalyzes the ATP-dependent amination of UTP to CTP with either L-glutamine or ammonia as the source of nitrogen. Regulates intracellular CTP levels through interactions with the four ribonucleotide triphosphates. The polypeptide is CTP synthase (Rickettsia bellii (strain RML369-C)).